The sequence spans 623 residues: Leucine-rich repeat, immunoglobulin-like domain and transmembrane domain-containing protein 1 (623 aa).

An N-terminal signal peptide occupies residues 1 to 21 (MRVALGMLWLLALAWPPQARG). One can recognise an LRRNT domain in the interval 22–59 (FCPSQCSCSLHIMGDGSKARTVVCNDPDMTLPPASIPP). Topologically, residues 22–526 (FCPSQCSCSL…EVVDAENTQQ (505 aa)) are lumenal. LRR repeat units follow at residues 60 to 81 (DTSR…AFRP), 84 to 105 (RLEQ…MLRG), 108 to 129 (RLRE…ALRD), 132 to 153 (KLRL…AARF), and 156 to 177 (NLTF…LIVS). An N-linked (GlcNAc...) asparagine glycan is attached at N156. Positions 201–253 (NPWACDCRLYDLVHLLDGWAPNLAFIETELRCASPRSLAGVAFSQLELRKCQG) constitute an LRRCT domain. The Ig-like C2-type domain occupies 266–335 (LLGGTALLRC…YICQAKNFLG (70 aa)). A disulfide bridge connects residues C275 and C328. Residues N296 and N455 are each glycosylated (N-linked (GlcNAc...) asparagine). The region spanning 430–518 (MVRSVKVVGD…QCVIFSTNEV (89 aa)) is the Fibronectin type-III domain. The helical transmembrane segment at 527–547 (LINVVVISVAIVIALPLTLLV) threads the bilayer. The Cytoplasmic segment spans residues 548–623 (CCSALQKRCR…GGRRINEYFC (76 aa)). The LRR 6 repeat unit spans residues 571-594 (YVNLERLGYSEDGLEELSRHSVSE).

As to quaternary structure, may form a homodimer. Interacts with LRIT2; may form a heterodimer with LRIT2. Interacts (via its N-terminal extracellular domain) with metabotropic glutamate receptor GRM6. Interacts (via its extreme C-terminus) with the scaffold protein FRMPD2 (via the third PDZ domain); the interaction leads to their colocalization in photoreceptor synapses.

The protein localises to the endoplasmic reticulum membrane. Its subcellular location is the cell projection. The protein resides in the dendrite. Photoreceptor synaptic protein essential for normal vision. Involved in synapse formation in cone photoreceptor cells. The sequence is that of Leucine-rich repeat, immunoglobulin-like domain and transmembrane domain-containing protein 1 (LRIT1) from Homo sapiens (Human).